The sequence spans 203 residues: Ribonuclease HII (203 aa).

In terms of domain architecture, RNase H type-2 spans 15 to 201 (LLVAGLDEAG…VAQAPLRFPE (187 aa)). The a divalent metal cation site is built by Asp21, Glu22, and Asp111.

It belongs to the RNase HII family. It depends on Mn(2+) as a cofactor. Mg(2+) is required as a cofactor.

It is found in the cytoplasm. It catalyses the reaction Endonucleolytic cleavage to 5'-phosphomonoester.. In terms of biological role, endonuclease that specifically degrades the RNA of RNA-DNA hybrids. The chain is Ribonuclease HII from Thermus thermophilus (strain ATCC 27634 / DSM 579 / HB8).